A 76-amino-acid chain; its full sequence is MFTMKKSMLLLFFLGTISLSLCEEERSADEDDGEEEVKRSLFSIFKTAAKFVGKNLLKQAGKAGLETLACKAKNEC.

A signal peptide spans 1-22 (MFTMKKSMLLLFFLGTISLSLC). Positions 23 to 37 (EEERSADEDDGEEEV) are cleaved as a propeptide — removed in mature form. Cysteines 70 and 76 form a disulfide.

As to expression, expressed by the skin glands.

The protein localises to the secreted. Its function is as follows. Antimicrobial peptide active against a variety of Gram-positive and some Gram-negative bacterial strains. Has antifungal activity against a slime mold isolate. Has hemolytic activity against human erythrocytes. The sequence is that of Esculentin-2CG1 from Amolops chunganensis (Chungan torrent frog).